Here is a 599-residue protein sequence, read N- to C-terminus: Elongation factor 4 (599 aa).

In terms of domain architecture, tr-type G spans 5–187 (STIRNFAIIA…AIVHRLPAPV (183 aa)). GTP is bound by residues 17–22 (DHGKST) and 134–137 (NKAD).

Belongs to the TRAFAC class translation factor GTPase superfamily. Classic translation factor GTPase family. LepA subfamily.

The protein localises to the cell inner membrane. It catalyses the reaction GTP + H2O = GDP + phosphate + H(+). Functionally, required for accurate and efficient protein synthesis under certain stress conditions. May act as a fidelity factor of the translation reaction, by catalyzing a one-codon backward translocation of tRNAs on improperly translocated ribosomes. Back-translocation proceeds from a post-translocation (POST) complex to a pre-translocation (PRE) complex, thus giving elongation factor G a second chance to translocate the tRNAs correctly. Binds to ribosomes in a GTP-dependent manner. In Anaplasma marginale (strain Florida), this protein is Elongation factor 4.